Here is a 100-residue protein sequence, read N- to C-terminus: Urease subunit gamma (100 aa).

The protein belongs to the urease gamma subunit family. In terms of assembly, heterotrimer of UreA (gamma), UreB (beta) and UreC (alpha) subunits. Three heterotrimers associate to form the active enzyme.

The protein localises to the cytoplasm. It carries out the reaction urea + 2 H2O + H(+) = hydrogencarbonate + 2 NH4(+). It functions in the pathway nitrogen metabolism; urea degradation; CO(2) and NH(3) from urea (urease route): step 1/1. In Methylocella silvestris (strain DSM 15510 / CIP 108128 / LMG 27833 / NCIMB 13906 / BL2), this protein is Urease subunit gamma.